A 343-amino-acid chain; its full sequence is Biotin synthase 2 (343 aa).

The Radical SAM core domain occupies 58-285 (NEVQLSTLLS…LTMVRLSAGR (228 aa)). 3 residues coordinate [4Fe-4S] cluster: cysteine 73, cysteine 77, and cysteine 80. Positions 117, 148, 208, and 280 each coordinate [2Fe-2S] cluster.

This sequence belongs to the radical SAM superfamily. Biotin synthase family. Homodimer. Requires [4Fe-4S] cluster as cofactor. It depends on [2Fe-2S] cluster as a cofactor.

The catalysed reaction is (4R,5S)-dethiobiotin + (sulfur carrier)-SH + 2 reduced [2Fe-2S]-[ferredoxin] + 2 S-adenosyl-L-methionine = (sulfur carrier)-H + biotin + 2 5'-deoxyadenosine + 2 L-methionine + 2 oxidized [2Fe-2S]-[ferredoxin]. Its pathway is cofactor biosynthesis; biotin biosynthesis; biotin from 7,8-diaminononanoate: step 2/2. In terms of biological role, catalyzes the conversion of dethiobiotin (DTB) to biotin by the insertion of a sulfur atom into dethiobiotin via a radical-based mechanism. The sequence is that of Biotin synthase 2 from Polaromonas sp. (strain JS666 / ATCC BAA-500).